Consider the following 1140-residue polypeptide: Envelopment polyprotein (1140 aa).

The N-terminal stretch at 1-17 (MVGWVCIFLVVLTTATA) is a signal peptide. At 18 to 480 (GLTRNLYELK…AHSLAVELCV (463 aa)) the chain is on the lumenal side. 6 disulfides stabilise this stretch: Cys30–Cys155, Cys64–Cys161, Cys113–Cys132, Cys137–Cys142, Cys179–Cys189, and Cys214–Cys251. The N-linked (GlcNAc...) asparagine; by host glycan is linked to Asn138. Asn351 carries an N-linked (GlcNAc...) asparagine; by host glycan. 4 cysteine pairs are disulfide-bonded: Cys380–Cys439, Cys384–Cys393, Cys409–Cys428, and Cys456–Cys479. The N-linked (GlcNAc...) asparagine; by host glycan is linked to Asn403. A helical membrane pass occupies residues 490-510 (ALLITFCFGWLLIPAVTLIIL). Residues 511-631 (KILRLLTFSC…LGVFRYKSRC (121 aa)) lie on the Cytoplasmic side of the membrane. The segment at 520 to 537 (CSHYSTESKFKVILERVK) is binding to the ribonucleoprotein. 2 consecutive CCHC-type zinc fingers follow at residues 549 to 569 (CDICHHECETAKELETHKKSC) and 574 to 595 (CPYCMTITESTESALQAHFAIC). Binding to the ribonucleoprotein stretches follow at residues 592–609 (FAICKLTNRFQENLKKSL), 596–607 (KLTNRFQENLKK), and 615–629 (RKGCYRTLGVFRYKS). The 24-residue stretch at 615–638 (RKGCYRTLGVFRYKSRCYVGLVWG) folds into the ITAM domain. Phosphotyrosine occurs at positions 619 and 632. The YxxL signature appears at 619–622 (YRTL). The helical transmembrane segment at 632 to 652 (YVGLVWGILLTTELIIWAASA) threads the bilayer. The Lumenal portion of the chain corresponds to 653–1108 (DTPLMESGWS…EWLLGILNGN (456 aa)). 8 disulfide bridges follow: Cys739-Cys774, Cys743-Cys781, Cys755-Cys888, Cys769-Cys899, Cys784-Cys907, Cys810-Cys819, Cys827-Cys836, and Cys867-Cys871. Residues 761–781 (YQYETSWGCNPPDCPGVGTGC) are fusion loop. Asn931 is a glycosylation site (N-linked (GlcNAc...) asparagine; by host). 5 disulfide bridges follow: Cys973–Cys1003, Cys996–Cys1048, Cys1013–Cys1018, Cys1049–Cys1054, and Cys1088–Cys1092. Residues 1109 to 1129 (WVVVAVLIVILILSILLFSFF) traverse the membrane as a helical segment. A binding to the ribonucleoprotein region spans residues 1125 to 1140 (LFSFFCPVRSRKNKAN). Residues 1130 to 1140 (CPVRSRKNKAN) lie on the Cytoplasmic side of the membrane.

The protein belongs to the hantavirus envelope glycoprotein family. As to quaternary structure, homodimer. Homotetramer; forms heterotetrameric Gn-Gc spikes in the pre-fusion conformation. Interacts (via C-terminus) with the nucleoprotein. Interacts with host TUFM; this interaction contributes to the virus-induced degradation of mitochondria by autophagy, which leads to degradation of host MAVS and inhibition of type I interferon (IFN) responses. Interacts with host MAP1LC3B; this interaction contributes to the virus-induced degradation of mitochondria by autophagy, which leads to degradation of host MAVS and inhibition of type I interferon (IFN) responses. Homodimer. Homotetramer; forms heterotetrameric Gn-Gc spikes in the pre-fusion conformation. Homotrimer; forms homotrimer in the post-fusion conformation at acidic pH. Interacts (via C-terminus) with the nucleoprotein. In terms of processing, envelope polyprotein precursor is quickly cleaved in vivo just after synthesis, presumably by host signal peptidase.

The protein resides in the virion membrane. It is found in the host cell surface. It localises to the host Golgi apparatus membrane. Its subcellular location is the host endoplasmic reticulum membrane. The protein localises to the host mitochondrion. Functionally, forms homotetramers with glycoprotein C at the surface of the virion. Attaches the virion to host cell receptors including integrin ITGAV/ITGB3. This attachment induces virion internalization predominantly through clathrin-dependent endocytosis. Mediates the assembly and budding of infectious virus particles through its interaction with the nucleocapsid protein and the viral genome. May dysregulate normal immune and endothelial cell responses through an ITAM motif. Translocates to mitochondria, binds to host TUFM and recruits MAP1LC3B. These interactions induce mitochondrial autophagy and therefore destruction of host MAVS leading to inhibition of type I interferon (IFN) responses. Concomitant breakdown of glycoprotein N is apparently prevented by the nucleoprotein that may inhibit Gn-stimulated autophagosome-lysosome fusion. Interacts with the viral genomic RNA. In terms of biological role, forms homotetramers with glycoprotein N at the surface of the virion. Attaches the virion to host cell receptors including integrin ITGAV/ITGB3. This attachment induces virion internalization predominantly through clathrin-dependent endocytosis. Class II fusion protein that promotes fusion of viral membrane with host endosomal membrane after endocytosis of the virion. In Sin Nombre orthohantavirus (SNV), this protein is Envelopment polyprotein (GP).